Here is a 309-residue protein sequence, read N- to C-terminus: Probable HTH-type transcriptional regulator LtrA (309 aa).

In terms of domain architecture, HTH lysR-type spans 1–61 (MNLNLLPDLA…QRTTRKLRLS (61 aa)). Residues 21-40 (FSAVARQNGITPSAVSRSVS) constitute a DNA-binding region (H-T-H motif).

This sequence belongs to the LysR transcriptional regulatory family.

The polypeptide is Probable HTH-type transcriptional regulator LtrA (ltrA) (Klebsiella pneumoniae).